The following is a 140-amino-acid chain: Small ribosomal subunit protein uS19 (140 aa).

The protein belongs to the universal ribosomal protein uS19 family.

In terms of biological role, protein S19 forms a complex with S13 that binds strongly to the 16S ribosomal RNA. This chain is Small ribosomal subunit protein uS19, found in Natronomonas pharaonis (strain ATCC 35678 / DSM 2160 / CIP 103997 / JCM 8858 / NBRC 14720 / NCIMB 2260 / Gabara) (Halobacterium pharaonis).